The sequence spans 311 residues: MTENNRLSVKLPGLDLKNPIIPASGCFGFGEEYAKYYDLNKLGSIMVKATTLHPRFGNPTPRVAETASGMLNAIGLQNPGLEVIMTEKLPWLNENFPELPIIANVAGSEEADYVAVCAKIGDAANVKAIELNISCPNVKHGGQAFGTDPEVAAALVKACKAVSKVPLYVKLSPNVTDIVPIAKAVEAAGADGLTMINTLMGVRFDLKTRQPILANITGGLSGPAIKPVALKLIHQVAQVVDIPIIGMGGVANAQDVLEMYMAGASAVAVGTANFADPFVCPKIIDKLPELMDQYRIESLESLIQEVKEGKK.

FMN is bound by residues S24 and 48-49 (KA). Residues K48 and 72–76 (NAIGL) contribute to the substrate site. FMN contacts are provided by N104 and N132. Residue N132 coordinates substrate. The active-site Nucleophile is the C135. FMN is bound by residues K170 and I196. 197–198 (NT) is a substrate binding site. Residues G222, 248 to 249 (GG), and 270 to 271 (GT) contribute to the FMN site.

This sequence belongs to the dihydroorotate dehydrogenase family. Type 1 subfamily. As to quaternary structure, heterotetramer of 2 PyrK and 2 PyrD type B subunits. It depends on FMN as a cofactor.

Its subcellular location is the cytoplasm. The catalysed reaction is (S)-dihydroorotate + NAD(+) = orotate + NADH + H(+). Its pathway is pyrimidine metabolism; UMP biosynthesis via de novo pathway; orotate from (S)-dihydroorotate (NAD(+) route): step 1/1. Its function is as follows. Catalyzes the conversion of dihydroorotate to orotate with NAD(+) as electron acceptor. Cannot use fumarate as an electron acceptor. This Lactococcus lactis subsp. cremoris (strain MG1363) protein is Dihydroorotate dehydrogenase B (NAD(+)), catalytic subunit (pyrDB).